The sequence spans 457 residues: MGTARLRKLQLLLLLGAWRALGGAARCRVTLVLSPQKATSAVCRSSEATQDSELATLRMRLGRHEELLRALQRRAAEGGALADEVRALREHSLTLNTRLGQLRAQLQQEARAEPDLGAEPAAALGLLAERALDAEAEARRTTARLQQLDAQLREHAQLMSQHSSLLGRLQRACAGPERGQQQVLPLPLAPLVPLSLVGSASNTSRRLDQTPEHQREQSLRQQGPPSSLLPTGHLAVPTRPVGPWRDCAEAHGAGHWQSGVYDLRLGRRVVAVWCEQQQEGGGWTVIQRRQDGSVNFFTNWQHYKAGFGRPEGEYWLGLEPVHQVTSRGDHELLILLEDWGGRAARAHYDSFSLEPESDHYRLRLGQYHGDAGDSLSWHNDKPFSTVDRDRDSYSGNCALYHRGGWWYHACAHSNLNGVWYHGGHYRSRYQDGVYWAEFRGGAYSLKKAVMLTRLVRL.

The first 24 residues, 1–24, serve as a signal peptide directing secretion; that stretch reads MGTARLRKLQLLLLLGAWRALGGA. Coiled-coil stretches lie at residues 51–77 and 126–164; these read DSEL…RAAE and LLAE…QHSS. The disordered stretch occupies residues 201 to 235; that stretch reads SNTSRRLDQTPEHQREQSLRQQGPPSSLLPTGHLA. Asparagine 202 is a glycosylation site (N-linked (GlcNAc...) asparagine). Residues 205–218 are compositionally biased toward basic and acidic residues; the sequence is RRLDQTPEHQREQS. Residues 219–229 show a composition bias toward polar residues; sequence LRQQGPPSSLL. Residues 238 to 456 form the Fibrinogen C-terminal domain; the sequence is TRPVGPWRDC…KAVMLTRLVR (219 aa). 2 cysteine pairs are disulfide-bonded: cysteine 247–cysteine 274 and cysteine 397–cysteine 410.

Highly expressed in the liver, specifically in hepatocytes, and weakly in the heart. Expressed in hematopoietic cells, platelets and mast cells, and detected at wounded skin.

The protein localises to the secreted. May play a role in the wound healing process. May promote epidermal proliferation, remodeling and regeneration. May promote the chemotactic activity of endothelial cells and induce neovascularization. May counteract high-fat diet-induced obesity and related insulin resistance through increased energy expenditure. This is Angiopoietin-related protein 6 (Angptl6) from Mus musculus (Mouse).